We begin with the raw amino-acid sequence, 164 residues long: FMN reductase (NADH) RutF (164 aa).

This sequence belongs to the non-flavoprotein flavin reductase family. RutF subfamily.

It carries out the reaction FMNH2 + NAD(+) = FMN + NADH + 2 H(+). Functionally, catalyzes the reduction of FMN to FMNH2 which is used to reduce pyrimidine by RutA via the Rut pathway. This is FMN reductase (NADH) RutF from Escherichia coli O81 (strain ED1a).